The following is a 427-amino-acid chain: Gamma-glutamyl phosphate reductase (427 aa).

It belongs to the gamma-glutamyl phosphate reductase family.

The protein localises to the cytoplasm. It carries out the reaction L-glutamate 5-semialdehyde + phosphate + NADP(+) = L-glutamyl 5-phosphate + NADPH + H(+). Its pathway is amino-acid biosynthesis; L-proline biosynthesis; L-glutamate 5-semialdehyde from L-glutamate: step 2/2. Functionally, catalyzes the NADPH-dependent reduction of L-glutamate 5-phosphate into L-glutamate 5-semialdehyde and phosphate. The product spontaneously undergoes cyclization to form 1-pyrroline-5-carboxylate. This is Gamma-glutamyl phosphate reductase from Bifidobacterium adolescentis (strain ATCC 15703 / DSM 20083 / NCTC 11814 / E194a).